Reading from the N-terminus, the 617-residue chain is Dihydroxy-acid dehydratase (617 aa).

Asp-81 contributes to the Mg(2+) binding site. Cys-122 provides a ligand contact to [2Fe-2S] cluster. Asp-123 and Lys-124 together coordinate Mg(2+). Lys-124 bears the N6-carboxylysine mark. [2Fe-2S] cluster is bound at residue Cys-195. Glu-491 contributes to the Mg(2+) binding site. The active-site Proton acceptor is Ser-517.

Belongs to the IlvD/Edd family. In terms of assembly, homodimer. [2Fe-2S] cluster serves as cofactor. Requires Mg(2+) as cofactor.

The catalysed reaction is (2R)-2,3-dihydroxy-3-methylbutanoate = 3-methyl-2-oxobutanoate + H2O. It carries out the reaction (2R,3R)-2,3-dihydroxy-3-methylpentanoate = (S)-3-methyl-2-oxopentanoate + H2O. Its pathway is amino-acid biosynthesis; L-isoleucine biosynthesis; L-isoleucine from 2-oxobutanoate: step 3/4. It functions in the pathway amino-acid biosynthesis; L-valine biosynthesis; L-valine from pyruvate: step 3/4. Functionally, functions in the biosynthesis of branched-chain amino acids. Catalyzes the dehydration of (2R,3R)-2,3-dihydroxy-3-methylpentanoate (2,3-dihydroxy-3-methylvalerate) into 2-oxo-3-methylpentanoate (2-oxo-3-methylvalerate) and of (2R)-2,3-dihydroxy-3-methylbutanoate (2,3-dihydroxyisovalerate) into 2-oxo-3-methylbutanoate (2-oxoisovalerate), the penultimate precursor to L-isoleucine and L-valine, respectively. This is Dihydroxy-acid dehydratase from Rhodospirillum rubrum (strain ATCC 11170 / ATH 1.1.1 / DSM 467 / LMG 4362 / NCIMB 8255 / S1).